The sequence spans 294 residues: 4-hydroxy-tetrahydrodipicolinate synthase (294 aa).

Pyruvate is bound at residue Thr-47. Catalysis depends on Tyr-136, which acts as the Proton donor/acceptor. Catalysis depends on Lys-164, which acts as the Schiff-base intermediate with substrate. Val-206 contacts pyruvate.

The protein belongs to the DapA family. In terms of assembly, homotetramer; dimer of dimers.

Its subcellular location is the cytoplasm. It carries out the reaction L-aspartate 4-semialdehyde + pyruvate = (2S,4S)-4-hydroxy-2,3,4,5-tetrahydrodipicolinate + H2O + H(+). It participates in amino-acid biosynthesis; L-lysine biosynthesis via DAP pathway; (S)-tetrahydrodipicolinate from L-aspartate: step 3/4. Functionally, catalyzes the condensation of (S)-aspartate-beta-semialdehyde [(S)-ASA] and pyruvate to 4-hydroxy-tetrahydrodipicolinate (HTPA). This chain is 4-hydroxy-tetrahydrodipicolinate synthase, found in Nostoc punctiforme (strain ATCC 29133 / PCC 73102).